The sequence spans 221 residues: Deoxyribose-phosphate aldolase (221 aa).

D89 acts as the Proton donor/acceptor in catalysis. The Schiff-base intermediate with acetaldehyde role is filled by K151. K180 functions as the Proton donor/acceptor in the catalytic mechanism.

The protein belongs to the DeoC/FbaB aldolase family. DeoC type 1 subfamily.

It localises to the cytoplasm. It carries out the reaction 2-deoxy-D-ribose 5-phosphate = D-glyceraldehyde 3-phosphate + acetaldehyde. Its pathway is carbohydrate degradation; 2-deoxy-D-ribose 1-phosphate degradation; D-glyceraldehyde 3-phosphate and acetaldehyde from 2-deoxy-alpha-D-ribose 1-phosphate: step 2/2. In terms of biological role, catalyzes a reversible aldol reaction between acetaldehyde and D-glyceraldehyde 3-phosphate to generate 2-deoxy-D-ribose 5-phosphate. This chain is Deoxyribose-phosphate aldolase, found in Mesomycoplasma hyopneumoniae (strain 232) (Mycoplasma hyopneumoniae).